The sequence spans 550 residues: Leiomodin-2 (550 aa).

Residues 1 to 47 (MSTFGYRRGLSKYESIDEDELLASLSPEELKELERELEDIEPDRNLP) are interaction with tropomyosin alpha. 3 interaction with actin regions span residues 1–165 (MSTF…TDNS), 166–500 (KPKT…KEIK), and 524–543 (VHEN…LRRV). Phosphoserine is present on residues S11, S15, and S24. Residues 84–94 (ERLGECGKVAE) show a composition bias toward basic and acidic residues. Disordered stretches follow at residues 84–202 (ERLG…PCGN) and 359–527 (MDKQ…VHEN). Positions 91–147 (KVAEEDKEESEEELIFTESNSEVSEEVCTEDEEESQEEEEDSEEEEDSEEEEETTEA) form a coiled coil. 2 stretches are compositionally biased toward acidic residues: residues 95-105 (EDKEESEEELI) and 113-145 (VSEE…EETT). 2 stretches are compositionally biased toward polar residues: residues 151–164 (INGT…NTDN) and 170–193 (FKSQ…NSES). The span at 359–377 (MDKQRQKRMQEQKQQEGHD) shows a compositional bias: basic and acidic residues. A compositionally biased stretch (polar residues) spans 391–402 (TPGSSPYASPRQ). S407 is modified (phosphoserine). The span at 421 to 452 (PPSPVAPPPPPPPPPLPPHMLPPPPPPPAPPL) shows a compositional bias: pro residues. A compositionally biased stretch (polar residues) spans 468–479 (QQESAQRALQNG). Over residues 480-490 (QRKKKGKKVKK) the composition is skewed to basic residues. Residues 497–515 (KEIKNSLRSVQEKKMEDSS) are compositionally biased toward basic and acidic residues. The region spanning 524–543 (VHENLMEAIRGSSIRQLRRV) is the WH2 domain.

The protein belongs to the tropomodulin family. As to quaternary structure, can bind at least three actin monomers and thereby provides a nucleus for actin filament formation. Interacts (via N-terminus) with tropomyosin alpha (TPM1) (via N-terminus). May also interact with TPM2 (via N-terminus). Interacts with FLII. In terms of tissue distribution, detected in neonate heart (at protein level). Detected in embryonic heart and in pharyngeal arches. Detected in adult heart.

The protein localises to the cytoplasm. Its subcellular location is the myofibril. The protein resides in the sarcomere. It localises to the m line. It is found in the cytoskeleton. Functionally, mediates nucleation of actin filaments and thereby promotes actin polymerization. Plays a role in the regulation of actin filament length. Required for normal sarcomere organization in the heart, and for normal heart function. In Mus musculus (Mouse), this protein is Leiomodin-2 (Lmod2).